Consider the following 402-residue polypeptide: Protein DesVIII (402 aa).

Belongs to the cytochrome P450 family. As to quaternary structure, forms a complex with DesVII.

It participates in antibiotic biosynthesis. Functionally, involved in the biosynthesis of the macrolide antibiotics methymycin, neomethymycin, narbomycin, and pikromycin. DesVIII assists the folding of the DesVII polypeptide. However, unlike chaperones, it remains bound to DesVII during catalysis, forming a tight DesVII/DesVIII complex. Although the formation of the DesVII/DesVIII complex is essential for the catalytic activity, DesVIII is unlikely to be involved in catalysis directly. The protein is Protein DesVIII of Streptomyces venezuelae.